The primary structure comprises 184 residues: Glutathione-regulated potassium-efflux system ancillary protein KefG (184 aa).

This sequence belongs to the NAD(P)H dehydrogenase (quinone) family. KefG subfamily. Interacts with KefB.

It is found in the cell inner membrane. It catalyses the reaction a quinone + NADH + H(+) = a quinol + NAD(+). The catalysed reaction is a quinone + NADPH + H(+) = a quinol + NADP(+). Regulatory subunit of a potassium efflux system that confers protection against electrophiles. Required for full activity of KefB. In Escherichia coli O8 (strain IAI1), this protein is Glutathione-regulated potassium-efflux system ancillary protein KefG.